The sequence spans 846 residues: Neurofilament medium polypeptide (846 aa).

A compositionally biased stretch (polar residues) spans 1 to 10 (MSYTLDSLGN). Residues 1-52 (MSYTLDSLGNPSAYRRVPTETRSSFSRVSGSPSSGFRSQSWSRGSPSTVSSS) are disordered. Position 2 is an N-acetylserine (serine 2). Residues 2–104 (SYTLDSLGNP…LSRSNEKEQL (103 aa)) are head. Residues 22–45 (RSSFSRVSGSPSSGFRSQSWSRGS) are compositionally biased toward low complexity. Serine 31 carries the phosphoserine modification. Omega-N-methylarginine is present on arginine 43. Threonine 48 carries an O-linked (GlcNAc) threonine glycan. Phosphoserine is present on serine 98. An IF rod domain is found at 100-411 (EKEQLQGLND…KLLEGEETRF (312 aa)). Positions 104–135 (LQGLNDRFAGYIEKVHYLEQQNKEIEAEIHAL) are coil 1A. A linker 1 region spans residues 136-148 (RQKQASHAQLGDA). The coil 1B stretch occupies residues 149 to 247 (YDQEIRELRA…EEEVADLLAQ (99 aa)). Serine 225 carries the phosphoserine modification. The interval 248–264 (IQASHITVERKDYLKTD) is linker 12. The segment at 265-286 (ISTALKEIRSQLECHSDQNMHQ) is coil 2A. Positions 287-290 (AEEW) are linker 2. The interval 291-411 (FKCRYAKLTE…KLLEGEETRF (121 aa)) is coil 2B. Tyrosine 319 is subject to Phosphotyrosine. Residues serine 345, serine 417, and serine 429 each carry the phosphoserine modification. A tail region spans residues 412 to 845 (STFSGSITGP…HAIVKEVTQG (434 aa)). An O-linked (GlcNAc) threonine glycan is attached at threonine 431. 2 positions are modified to phosphoserine: serine 467 and serine 483. The tract at residues 483–783 (SAKEEKEEAE…GEDRSDDKVV (301 aa)) is disordered. Residues 489–499 (EEAEEKEEEPE) show a composition bias toward acidic residues. Residues 500–510 (VEKSPVKSPEA) are compositionally biased toward basic and acidic residues. Serine 503 and serine 507 each carry phosphoserine. Positions 511 to 533 (KEEEEGEKEEEEEGQEEEEEEDE) are enriched in acidic residues. Residues 534 to 553 (GVKSDQAEEGGSEKEGSSEK) show a composition bias toward basic and acidic residues. Serine 537, serine 545, serine 550, and serine 551 each carry phosphoserine. The segment covering 554 to 575 (DEGEQEEEGETEAEGEGEEAEA) has biased composition (acidic residues). Residue threonine 564 is modified to Phosphothreonine. Over residues 576-603 (KEEKKTEGKVEEMAIKEEIKVEKPEKAK) the composition is skewed to basic and acidic residues. Serine 604, serine 609, serine 643, serine 667, serine 687, serine 713, serine 721, serine 751, and serine 767 each carry phosphoserine. Composition is skewed to basic and acidic residues over residues 610–675 (PVEE…KAVE) and 687–709 (SLEKDTKEEKPQQQEKVKEKAEE). Basic and acidic residues-rich tracts occupy residues 718-730 (GDKSPQESKKEDI) and 746-758 (TQEKGSGQEEEKG). Positions 769-783 (AEEKKGEDRSDDKVV) are enriched in basic and acidic residues.

The protein belongs to the intermediate filament family. As to quaternary structure, forms heterodimers with NEFL; which can further hetero-oligomerize (in vitro). Forms heterodimers with INA (in vitro). Post-translationally, there are a number of repeats of the tripeptide K-S-P, NFM is phosphorylated on a number of the serines in this motif. It is thought that phosphorylation of NFM results in the formation of interfilament cross bridges that are important in the maintenance of axonal caliber. In terms of processing, phosphorylation seems to play a major role in the functioning of the larger neurofilament polypeptides (NF-M and NF-H), the levels of phosphorylation being altered developmentally and coincidentally with a change in the neurofilament function. Phosphorylated in the head and rod regions by the PKC kinase PKN1, leading to the inhibition of polymerization. As to expression, expressed in the dorsal root ganglion neurons (at protein level).

The protein localises to the cytoplasm. The protein resides in the cytoskeleton. It is found in the cell projection. It localises to the axon. In terms of biological role, neurofilaments usually contain three intermediate filament proteins: NEFL, NEFM, and NEFH which are involved in the maintenance of neuronal caliber. May additionally cooperate with the neuronal intermediate filament proteins PRPH and INA to form neuronal filamentous networks. The protein is Neurofilament medium polypeptide (Nefm) of Rattus norvegicus (Rat).